A 206-amino-acid polypeptide reads, in one-letter code: Large ribosomal subunit protein uL4 (206 aa).

The disordered stretch occupies residues 62-85 (KPWRQKGTGRARQGSTRSPQFRGG).

This sequence belongs to the universal ribosomal protein uL4 family. Part of the 50S ribosomal subunit.

Its function is as follows. One of the primary rRNA binding proteins, this protein initially binds near the 5'-end of the 23S rRNA. It is important during the early stages of 50S assembly. It makes multiple contacts with different domains of the 23S rRNA in the assembled 50S subunit and ribosome. Forms part of the polypeptide exit tunnel. In Rhodospirillum centenum (strain ATCC 51521 / SW), this protein is Large ribosomal subunit protein uL4.